The following is a 243-amino-acid chain: Carboxy-S-adenosyl-L-methionine synthase (243 aa).

S-adenosyl-L-methionine-binding positions include tyrosine 40, 65-67 (GCS), 90-91 (DN), 118-119 (DI), asparagine 133, and arginine 200.

It belongs to the class I-like SAM-binding methyltransferase superfamily. Cx-SAM synthase family. In terms of assembly, homodimer.

It catalyses the reaction prephenate + S-adenosyl-L-methionine = carboxy-S-adenosyl-L-methionine + 3-phenylpyruvate + H2O. Its function is as follows. Catalyzes the conversion of S-adenosyl-L-methionine (SAM) to carboxy-S-adenosyl-L-methionine (Cx-SAM). This chain is Carboxy-S-adenosyl-L-methionine synthase, found in Shewanella baltica (strain OS223).